Consider the following 159-residue polypeptide: Small ribosomal subunit protein uS5c (159 aa).

The region spanning 17–80 (WEERVVSVQR…TDGKKNVITV (64 aa)) is the S5 DRBM domain.

This sequence belongs to the universal ribosomal protein uS5 family. As to quaternary structure, part of the 30S ribosomal subunit. Contacts protein S4.

Its subcellular location is the plastid. It is found in the chloroplast. In terms of biological role, with S4 and S12 plays an important role in translational accuracy. The sequence is that of Small ribosomal subunit protein uS5c (rps5) from Emiliania huxleyi (Coccolithophore).